The chain runs to 1019 residues: Insulin-degrading enzyme (1019 aa).

Zn(2+) is bound at residue His-108. The Proton acceptor role is filled by Glu-111. Zn(2+) is bound by residues His-112 and Glu-189. Position 192 is an N6-succinyllysine (Lys-192). 359-363 (LVGGQ) is a binding site for substrate. Arg-429 contacts ATP. Lys-697 is modified (N6-succinyllysine). The short motif at 853–858 (EKPPHY) is the SlyX motif element. ATP is bound at residue 895-901 (DKPKKLS).

This sequence belongs to the peptidase M16 family. As to quaternary structure, homodimer. Can also form homotetramers. Requires Zn(2+) as cofactor.

The protein resides in the cytoplasm. The protein localises to the cytosol. It is found in the cell membrane. It localises to the secreted. The catalysed reaction is Degradation of insulin, glucagon and other polypeptides. No action on proteins.. With respect to regulation, activated by ATP, other nucleotide triphosphates and small peptides. Inhibited by bacitracin. Plays a role in the cellular breakdown of insulin, APP peptides, IAPP peptides, natriuretic peptides, glucagon, bradykinin, kallidin, and other peptides, and thereby plays a role in intercellular peptide signaling. Substrate binding induces important conformation changes, making it possible to bind and degrade larger substrates, such as insulin. Contributes to the regulation of peptide hormone signaling cascades and regulation of blood glucose homeostasis via its role in the degradation of insulin, glucagon and IAPP. Plays a role in the degradation and clearance of APP-derived amyloidogenic peptides that are secreted by neurons and microglia. Degrades the natriuretic peptides ANP, BNP and CNP, inactivating their ability to raise intracellular cGMP. Also degrades an aberrant frameshifted 40-residue form of NPPA (fsNPPA) which is associated with familial atrial fibrillation in heterozygous patients. Involved in antigen processing. Produces both the N terminus and the C terminus of MAGEA3-derived antigenic peptide (EVDPIGHLY) that is presented to cytotoxic T lymphocytes by MHC class I. The polypeptide is Insulin-degrading enzyme (IDE) (Bos taurus (Bovine)).